The primary structure comprises 343 residues: Ribosomal RNA-processing protein 8 (343 aa).

A disordered region spans residues 1–123 (MGKKRKITDE…NDDVAAAPEE (123 aa)). The span at 7-33 (ITDEKDAQHVPAEKREKVENWLKKSTE) shows a compositional bias: basic and acidic residues. Composition is skewed to basic residues over residues 45 to 59 (KKKR…KLAA) and 89 to 101 (KKKR…KKKF). The segment covering 112–123 (TENDDVAAAPEE) has biased composition (acidic residues). Histidine 169, glycine 204, aspartate 224, aspartate 236, methionine 237, and cysteine 253 together coordinate S-adenosyl-L-methionine.

Belongs to the methyltransferase superfamily. RRP8 family.

Its subcellular location is the nucleus. It localises to the nucleolus. Probable methyltransferase required to silence rDNA. Involved in regulation of antisense ribosomal siRNA production. Required for the N1-methyladenosine modification of 26S rRNAs. This chain is Ribosomal RNA-processing protein 8 (rrp-8), found in Caenorhabditis elegans.